The primary structure comprises 496 residues: 1-aminocyclopropane-1-carboxylate synthase 2 (496 aa).

2 residues coordinate substrate: E55 and Y93. The residue at position 279 (K279) is an N6-(pyridoxal phosphate)lysine. Phosphoserine is present on residues S483, S488, and S491.

Belongs to the class-I pyridoxal-phosphate-dependent aminotransferase family. As to quaternary structure, homodimer and heterodimer. In vivo, the relevance of heterodimerization with other ACS enzymes is however unsure. Interacts with GRF3. The cofactor is pyridoxal 5'-phosphate. Post-translationally, phosphorylated on serine residue by MAP kinase (MPK6). In terms of processing, may be processed at its C-terminus. In terms of tissue distribution, high in developing leaves and in flowers. Expressed in roots and siliques.

It carries out the reaction S-adenosyl-L-methionine = 1-aminocyclopropane-1-carboxylate + S-methyl-5'-thioadenosine + H(+). The protein operates within alkene biosynthesis; ethylene biosynthesis via S-adenosyl-L-methionine; ethylene from S-adenosyl-L-methionine: step 1/2. 1-aminocyclopropane-1-carboxylate synthase (ACS) enzymes catalyze the conversion of S-adenosyl-L-methionine (SAM) into 1-aminocyclopropane-1-carboxylate (ACC), a direct precursor of ethylene. This chain is 1-aminocyclopropane-1-carboxylate synthase 2 (ACS2), found in Arabidopsis thaliana (Mouse-ear cress).